We begin with the raw amino-acid sequence, 363 residues long: Peptide-N(4)-(N-acetyl-beta-glucosaminyl)asparagine amidase (363 aa).

The Zn(2+) site is built by Cys-129, Cys-132, Cys-165, and Cys-168. The active-site Nucleophile is Cys-191. Catalysis depends on residues His-218 and Asp-235. Residue Glu-238 coordinates substrate. The segment at 325 to 363 is disordered; it reads RGKTQETKSESVSAASKSSNRGRESGSADWKAQRGEDGK. The span at 334-343 shows a compositional bias: low complexity; that stretch reads ESVSAASKSS. Residues 345–363 are compositionally biased toward basic and acidic residues; the sequence is RGRESGSADWKAQRGEDGK.

It belongs to the transglutaminase-like superfamily. PNGase family. As to quaternary structure, interacts with RAD23 subunit of 26S proteasome. Zn(2+) serves as cofactor.

It is found in the cytoplasm. The protein resides in the nucleus. The enzyme catalyses Hydrolysis of an N(4)-(acetyl-beta-D-glucosaminyl)asparagine residue in which the glucosamine residue may be further glycosylated, to yield a (substituted) N-acetyl-beta-D-glucosaminylamine and a peptide containing an aspartate residue.. With respect to regulation, inhibited by Z-VAD-fmk, a well-known caspase inhibitor. Also inhibited by Man9GlcNAc2-iodoacetoamide. Both molecules inhibit enzyme activity through covalent binding of the carbohydrate to the single Cys-191 residue. Functionally, specifically deglycosylates the denatured form of N-linked glycoproteins in the cytoplasm and assists their proteasome-mediated degradation. Cleaves the beta-aspartyl-glucosamine (GlcNAc) of the glycan and the amide side chain of Asn, converting Asn to Asp. Prefers proteins containing high-mannose over those bearing complex type oligosaccharides. Can recognize misfolded proteins in the endoplasmic reticulum that are exported to the cytosol to be destroyed and deglycosylate them, while it has no activity toward native proteins. Deglycosylation is a prerequisite for subsequent proteasome-mediated degradation of some, but not all, misfolded glycoproteins. Involved in the formation of free oligosaccharide in cytosol. This Saccharomyces cerevisiae (strain ATCC 204508 / S288c) (Baker's yeast) protein is Peptide-N(4)-(N-acetyl-beta-glucosaminyl)asparagine amidase (PNG1).